Here is a 340-residue protein sequence, read N- to C-terminus: L-threonine 3-dehydrogenase (340 aa).

Cys38 is a Zn(2+) binding site. Residues Thr40 and His43 each act as charge relay system in the active site. Positions 63, 64, 93, 96, 99, and 107 each coordinate Zn(2+). NAD(+) is bound by residues Ile175, Asp195, Arg200, 261–263 (LGI), and 285–286 (IY).

This sequence belongs to the zinc-containing alcohol dehydrogenase family. Homotetramer. Requires Zn(2+) as cofactor.

The protein resides in the cytoplasm. The catalysed reaction is L-threonine + NAD(+) = (2S)-2-amino-3-oxobutanoate + NADH + H(+). It functions in the pathway amino-acid degradation; L-threonine degradation via oxydo-reductase pathway; glycine from L-threonine: step 1/2. Its function is as follows. Catalyzes the NAD(+)-dependent oxidation of L-threonine to 2-amino-3-ketobutyrate. The polypeptide is L-threonine 3-dehydrogenase (Stenotrophomonas maltophilia (strain K279a)).